We begin with the raw amino-acid sequence, 428 residues long: Flotillin-1 (428 aa).

Residues Ser-19, Ser-163, and Ser-385 each carry the phosphoserine modification. Residue Thr-387 is modified to Phosphothreonine.

This sequence belongs to the band 7/mec-2 family. Flotillin subfamily. In terms of assembly, heterooligomeric complex of flotillin-1 and flotillin-2 and caveolin-1 and caveolin-2. Interacts with ECPAS. As to expression, high expression in brain, white adipose tissue, heart muscle, skeletal muscle and lung. Low expression in spleen, liver and testis.

It is found in the cell membrane. The protein localises to the endosome. It localises to the membrane. The protein resides in the caveola. Its subcellular location is the melanosome. It is found in the membrane raft. In terms of biological role, may act as a scaffolding protein within caveolar membranes, functionally participating in formation of caveolae or caveolae-like vesicles. In Mus musculus (Mouse), this protein is Flotillin-1 (Flot1).